The chain runs to 150 residues: Large ribosomal subunit protein uL11 (150 aa).

The protein belongs to the universal ribosomal protein uL11 family. In terms of assembly, part of the ribosomal stalk of the 50S ribosomal subunit. Interacts with L10 and the large rRNA to form the base of the stalk. L10 forms an elongated spine to which L12 dimers bind in a sequential fashion forming a multimeric L10(L12)X complex. Post-translationally, one or more lysine residues are methylated.

Forms part of the ribosomal stalk which helps the ribosome interact with GTP-bound translation factors. This Ureaplasma parvum serovar 3 (strain ATCC 27815 / 27 / NCTC 11736) protein is Large ribosomal subunit protein uL11.